The primary structure comprises 308 residues: Ornithine carbamoyltransferase (308 aa).

Residues 55 to 58, glutamine 82, arginine 106, and 133 to 136 each bind carbamoyl phosphate; these read STRT and HPCQ. L-ornithine contacts are provided by residues asparagine 164, aspartate 227, and 231 to 232; that span reads SM. Carbamoyl phosphate contacts are provided by residues 267-268 and arginine 295; that span reads CL.

The protein belongs to the aspartate/ornithine carbamoyltransferase superfamily. OTCase family.

It localises to the cytoplasm. The catalysed reaction is carbamoyl phosphate + L-ornithine = L-citrulline + phosphate + H(+). It functions in the pathway amino-acid biosynthesis; L-arginine biosynthesis; L-arginine from L-ornithine and carbamoyl phosphate: step 1/3. In terms of biological role, reversibly catalyzes the transfer of the carbamoyl group from carbamoyl phosphate (CP) to the N(epsilon) atom of ornithine (ORN) to produce L-citrulline. This is Ornithine carbamoyltransferase from Prochlorococcus marinus subsp. pastoris (strain CCMP1986 / NIES-2087 / MED4).